The primary structure comprises 177 residues: Ribonuclease clavin (177 aa).

Residues Met1–Arg27 form the signal peptide. 2 cysteine pairs are disulfide-bonded: Cys33–Cys175 and Cys103–Cys159. Residue His77 is part of the active site. The segment at Trp98–Asn117 is disordered. Residues Asp102–Asn117 are compositionally biased toward basic and acidic residues. The active-site Proton acceptor is Glu123. Residue His164 is the Proton donor of the active site.

It belongs to the ribonuclease U2 family.

It is found in the secreted. Clavin has the same substrate specificity as alpha-sarcin. It is specific for purines in both single- and double-stranded RNA. Its toxic action on eukaryotic cells is the result of cleavage of a single phosphodiester bond in the 60S subunit of ribosomes. The polypeptide is Ribonuclease clavin (cla) (Aspergillus clavatus (strain ATCC 1007 / CBS 513.65 / DSM 816 / NCTC 3887 / NRRL 1 / QM 1276 / 107)).